Consider the following 420-residue polypeptide: 3-isopropylmalate dehydratase large subunit (420 aa).

[4Fe-4S] cluster is bound by residues cysteine 300, cysteine 360, and cysteine 363.

Belongs to the aconitase/IPM isomerase family. LeuC type 2 subfamily. In terms of assembly, heterodimer of LeuC and LeuD. It depends on [4Fe-4S] cluster as a cofactor.

The catalysed reaction is (2R,3S)-3-isopropylmalate = (2S)-2-isopropylmalate. It participates in amino-acid biosynthesis; L-leucine biosynthesis; L-leucine from 3-methyl-2-oxobutanoate: step 2/4. Functionally, catalyzes the isomerization between 2-isopropylmalate and 3-isopropylmalate, via the formation of 2-isopropylmaleate. The protein is 3-isopropylmalate dehydratase large subunit of Helicobacter hepaticus (strain ATCC 51449 / 3B1).